Here is a 384-residue protein sequence, read N- to C-terminus: 8-amino-7-oxononanoate synthase (384 aa).

Residue Arg-21 participates in substrate binding. Residue 108–109 (GF) coordinates pyridoxal 5'-phosphate. A substrate-binding site is contributed by His-133. The pyridoxal 5'-phosphate site is built by Ser-179, His-207, and Thr-233. Lys-236 bears the N6-(pyridoxal phosphate)lysine mark. Substrate is bound at residue Thr-352.

It belongs to the class-II pyridoxal-phosphate-dependent aminotransferase family. BioF subfamily. In terms of assembly, homodimer. Pyridoxal 5'-phosphate is required as a cofactor.

The enzyme catalyses 6-carboxyhexanoyl-[ACP] + L-alanine + H(+) = (8S)-8-amino-7-oxononanoate + holo-[ACP] + CO2. It functions in the pathway cofactor biosynthesis; biotin biosynthesis. Catalyzes the decarboxylative condensation of pimeloyl-[acyl-carrier protein] and L-alanine to produce 8-amino-7-oxononanoate (AON), [acyl-carrier protein], and carbon dioxide. The polypeptide is 8-amino-7-oxononanoate synthase (Escherichia coli O7:K1 (strain IAI39 / ExPEC)).